A 237-amino-acid chain; its full sequence is Matrix protein (237 aa).

Over residues 1-10 the composition is skewed to low complexity; sequence MSSLKKILGL. Residues 1–23 are disordered; it reads MSSLKKILGLKGKGKKSKKLGIA. The short motif at 2–4 is the dynamin binding element; the sequence is SSL. Residues 24–27 carry the PPXY motif motif; that stretch reads PPPY. The PTAP/PSAP motif signature appears at 37 to 40; sequence PSAP.

It belongs to the vesiculoviruses matrix protein family. As to quaternary structure, homomultimer. Interacts with viral nucleocapsid; this interaction contributes to the virion assembly. Interacts with the viral envelope glycoprotein; this interaction contributes to the virion assembly. Interacts with host RAE1-NUP98 complex. Interacts with host NEDD4 and TSG101. Interacts with host dynamin. Interacts with host NDUFAF4; the interaction inhibits viral propagation and is independent of interferon activation. Interacts with host GTF2H5; the interaction may inhibit host transcription. Phosphorylated by host.

The protein localises to the virion. The protein resides in the host endomembrane system. It localises to the host nucleus membrane. Its subcellular location is the host nucleus. It is found in the host cytoplasm. Its function is as follows. Forms a double layer around the helical nucleocapsid, the inner matrix layer binding to the N helix and the outer matrix layer binding to the envelope glycoprotein. Plays a major role in assembly and budding of virion, by recruiting cellular partners of the ESCRT complexes that play a key role in releasing the budding particle from the host membrane. Condensates the ribonucleocapsid core during virus assembly. Inhibits the host mRNA nuclear export thereby inducing the shut off of cellular transcription and preventing the interferon signaling and the establishment of antiviral state in infected cells. This shutoff presumably inhibits interferon signaling and thus establishment of antiviral state in virus infected cells. Induces cell-rounding, cytoskeleton disorganization and apoptosis in infected cell. Inhibits host transcription, possibly through interaction with host DNA repair factor IIH/TFIIH GTF2H5 subunit. The polypeptide is Matrix protein (M) (Aedes (Bovine)).